A 229-amino-acid chain; its full sequence is Large ribosomal subunit protein uL1 (229 aa).

Belongs to the universal ribosomal protein uL1 family. Part of the 50S ribosomal subunit.

Functionally, binds directly to 23S rRNA. The L1 stalk is quite mobile in the ribosome, and is involved in E site tRNA release. Protein L1 is also a translational repressor protein, it controls the translation of the L11 operon by binding to its mRNA. The protein is Large ribosomal subunit protein uL1 of Chlorobium phaeobacteroides (strain DSM 266 / SMG 266 / 2430).